A 214-amino-acid polypeptide reads, in one-letter code: RING-H2 finger protein ATL67 (214 aa).

The chain crosses the membrane as a helical span at residues 33-53; the sequence is LGFGYSIAIALGFLVLLSTVL. Residues 138-180 form an RING-type; atypical zinc finger; the sequence is CSICLCEYKEAEMLRMMPECKHYFHLCCLDAWLKLNGSCPVCR.

Belongs to the RING-type zinc finger family. ATL subfamily.

The protein localises to the membrane. It catalyses the reaction S-ubiquitinyl-[E2 ubiquitin-conjugating enzyme]-L-cysteine + [acceptor protein]-L-lysine = [E2 ubiquitin-conjugating enzyme]-L-cysteine + N(6)-ubiquitinyl-[acceptor protein]-L-lysine.. Its pathway is protein modification; protein ubiquitination. This Arabidopsis thaliana (Mouse-ear cress) protein is RING-H2 finger protein ATL67 (ATL67).